A 347-amino-acid chain; its full sequence is N-acetyl-gamma-glutamyl-phosphate reductase (347 aa).

C155 is a catalytic residue.

The protein belongs to the NAGSA dehydrogenase family. Type 1 subfamily.

It is found in the cytoplasm. The enzyme catalyses N-acetyl-L-glutamate 5-semialdehyde + phosphate + NADP(+) = N-acetyl-L-glutamyl 5-phosphate + NADPH + H(+). Its pathway is amino-acid biosynthesis; L-arginine biosynthesis; N(2)-acetyl-L-ornithine from L-glutamate: step 3/4. Catalyzes the NADPH-dependent reduction of N-acetyl-5-glutamyl phosphate to yield N-acetyl-L-glutamate 5-semialdehyde. This chain is N-acetyl-gamma-glutamyl-phosphate reductase, found in Akkermansia muciniphila (strain ATCC BAA-835 / DSM 22959 / JCM 33894 / BCRC 81048 / CCUG 64013 / CIP 107961 / Muc).